Here is a 269-residue protein sequence, read N- to C-terminus: Dermonecrotic toxin SpeSicTox-betaIB3 (269 aa).

Residue His-5 is part of the active site. 2 residues coordinate Mg(2+): Glu-25 and Asp-27. Residue His-41 is the Nucleophile of the active site. 2 disulfides stabilise this stretch: Cys-45-Cys-51 and Cys-47-Cys-191. Residue Asp-85 participates in Mg(2+) binding.

It belongs to the arthropod phospholipase D family. Class II subfamily. Mg(2+) serves as cofactor. Expressed by the venom gland.

The protein resides in the secreted. It carries out the reaction an N-(acyl)-sphingosylphosphocholine = an N-(acyl)-sphingosyl-1,3-cyclic phosphate + choline. It catalyses the reaction an N-(acyl)-sphingosylphosphoethanolamine = an N-(acyl)-sphingosyl-1,3-cyclic phosphate + ethanolamine. The catalysed reaction is a 1-acyl-sn-glycero-3-phosphocholine = a 1-acyl-sn-glycero-2,3-cyclic phosphate + choline. The enzyme catalyses a 1-acyl-sn-glycero-3-phosphoethanolamine = a 1-acyl-sn-glycero-2,3-cyclic phosphate + ethanolamine. Functionally, dermonecrotic toxins cleave the phosphodiester linkage between the phosphate and headgroup of certain phospholipids (sphingolipid and lysolipid substrates), forming an alcohol (often choline) and a cyclic phosphate. This toxin acts on sphingomyelin (SM). It may also act on ceramide phosphoethanolamine (CPE), lysophosphatidylcholine (LPC) and lysophosphatidylethanolamine (LPE), but not on lysophosphatidylserine (LPS), and lysophosphatidylglycerol (LPG). It acts by transphosphatidylation, releasing exclusively cyclic phosphate products as second products. Induces dermonecrosis, hemolysis, increased vascular permeability, edema, inflammatory response, and platelet aggregation. This Sicarius peruensis (Six-eyed sand spider) protein is Dermonecrotic toxin SpeSicTox-betaIB3.